The sequence spans 548 residues: Membrane protein insertase YidC (548 aa).

Residues 6–26 (NLLVIALLFVSFMIWQAWEQD) form a helical membrane-spanning segment. A disordered region spans residues 28–55 (NPQPQAQQTTQTTTTAAGSAADQGVPAS). The segment covering 30 to 50 (QPQAQQTTQTTTTAAGSAADQ) has biased composition (low complexity). A run of 4 helical transmembrane segments spans residues 350–370 (FVGN…GIMY), 420–440 (LGGC…YYML), 458–478 (LSAQ…MFFI), and 499–519 (PVIF…YYIV).

This sequence belongs to the OXA1/ALB3/YidC family. Type 1 subfamily. As to quaternary structure, interacts with the Sec translocase complex via SecD. Specifically interacts with transmembrane segments of nascent integral membrane proteins during membrane integration.

Its subcellular location is the cell inner membrane. Functionally, required for the insertion and/or proper folding and/or complex formation of integral membrane proteins into the membrane. Involved in integration of membrane proteins that insert both dependently and independently of the Sec translocase complex, as well as at least some lipoproteins. Aids folding of multispanning membrane proteins. In Escherichia coli (strain K12 / MC4100 / BW2952), this protein is Membrane protein insertase YidC.